We begin with the raw amino-acid sequence, 545 residues long: Germacrene D synthase 1 (545 aa).

Residues Asp298, Asp302, Asn443, and Glu451 each contribute to the Mg(2+) site. Positions 298–302 match the DDXXD motif motif; sequence DDTFD.

Belongs to the terpene synthase family. The cofactor is Mg(2+).

The protein localises to the cytoplasm. It is found in the cytosol. The catalysed reaction is (2E,6E)-farnesyl diphosphate = (-)-germacrene D + diphosphate. It functions in the pathway secondary metabolite biosynthesis; terpenoid biosynthesis. Sesquiterpene synthase involved in germacrene D biosynthesis. Also produces at least 13 additional sesquiterpene products, including germacrene C and (+)-germacrene A, beta-ylangene, (E)-beta-farnesene and (E,E)-alpha-farnesene. The protein is Germacrene D synthase 1 of Pogostemon cablin (Patchouli).